The sequence spans 1209 residues: DNA-directed RNA polymerase subunit beta (1209 aa).

Residues 1173–1192 (QQEKKKLAEEAAKKDDKPDE) show a composition bias toward basic and acidic residues. Residues 1173–1209 (QQEKKKLAEEAAKKDDKPDEPVDESDSSTSSDDKVSK) are disordered.

Belongs to the RNA polymerase beta chain family. The RNAP catalytic core consists of 2 alpha, 1 beta, 1 beta' and 1 omega subunit. When a sigma factor is associated with the core the holoenzyme is formed, which can initiate transcription.

It catalyses the reaction RNA(n) + a ribonucleoside 5'-triphosphate = RNA(n+1) + diphosphate. Its function is as follows. DNA-dependent RNA polymerase catalyzes the transcription of DNA into RNA using the four ribonucleoside triphosphates as substrates. This chain is DNA-directed RNA polymerase subunit beta, found in Lactobacillus johnsonii (strain CNCM I-12250 / La1 / NCC 533).